Reading from the N-terminus, the 124-residue chain is Fluoride-specific ion channel FluC (124 aa).

The next 4 helical transmembrane spans lie at 1–21 (MVPLIVAVSVGGIAGTLLRFA), 38–58 (TLAVNIVGCLLIGVLYGLFLI), 69–89 (GLMVGFLGGLTTFSSFSLDTV), and 99–119 (LALGYAAISVFGGLLATWAGL). The Na(+) site is built by Gly-76 and Thr-79.

Belongs to the fluoride channel Fluc/FEX (TC 1.A.43) family.

It localises to the cell inner membrane. The enzyme catalyses fluoride(in) = fluoride(out). Na(+) is not transported, but it plays an essential structural role and its presence is essential for fluoride channel function. Functionally, fluoride-specific ion channel. Important for reducing fluoride concentration in the cell, thus reducing its toxicity. This chain is Fluoride-specific ion channel FluC, found in Pseudomonas fluorescens (strain Pf0-1).